We begin with the raw amino-acid sequence, 478 residues long: Calcium/calmodulin-dependent protein kinase type II subunit alpha (478 aa).

A Phosphotyrosine modification is found at Tyr13. The Protein kinase domain maps to 13–271 (YQLFEELGKG…AAEALKHPWI (259 aa)). Residues 19–27 (LGKGAFSVV) and Lys42 each bind ATP. Asp135 (proton acceptor) is an active-site residue. A Phosphoserine modification is found at Ser257. Thr286 is modified (phosphothreonine; by autocatalysis). Residues 290–300 (LKKFNARRKLK) form a calmodulin-binding region. An interaction with BAALC region spans residues 310–320 (TRNFSGGKSGG). The disordered stretch occupies residues 314–341 (SGGKSGGNKKSDGVKESSESTNTTIEDE). Positions 322-331 (KKSDGVKESS) are enriched in basic and acidic residues. Residues Ser330, Ser331, and Ser333 each carry the phosphoserine modification. 2 positions are modified to phosphothreonine: Thr336 and Thr337. Residue Ser404 is modified to Phosphoserine.

The protein belongs to the protein kinase superfamily. CAMK Ser/Thr protein kinase family. CaMK subfamily. As to quaternary structure, there are 4 genes encoding calcium/calmodulin-dependent protein kinase type II chains: CAMK2A, CAMK2B, CAMK2G and CAMK2D. The corresponding proteins assemble into homo- or heteromultimeric holoenzymes composed of 12 subunits with two hexameric rings stacked one on top of the other. Interacts with BAALC. Interacts with MPDZ. Interacts with SYN1. Interacts with CAMK2N2. Interacts with SYNGAP1. Interacts with SYNPO2. Interacts with SHANK3. Interacts with GRIN2B. Interacts with CACNB2. Interacts with LRRC7. Interacts with GRM5. Interacts with DAGLA (via C-terminal); this interaction is enhanced by autophosphorylation of CAMK2A at Thr-286. Interacts with CAMK2N1; this interaction requires CAMK2A activation by Ca(2+). Mg(2+) serves as cofactor. In terms of processing, autophosphorylation of Thr-286 following activation by Ca(2+)/calmodulin. Phosphorylation of Thr-286 locks the kinase into an activated state. Post-translationally, palmitoylated. Probably palmitoylated by ZDHHC3 and ZDHHC7.

The protein localises to the synapse. The protein resides in the postsynaptic density. Its subcellular location is the cell projection. It localises to the dendritic spine. It is found in the dendrite. It carries out the reaction L-seryl-[protein] + ATP = O-phospho-L-seryl-[protein] + ADP + H(+). The enzyme catalyses L-threonyl-[protein] + ATP = O-phospho-L-threonyl-[protein] + ADP + H(+). Its activity is regulated as follows. Activated by Ca(2+)/calmodulin. Binding of calmodulin results in conformational change that relieves intrasteric autoinhibition and allows autophosphorylation of Thr-286 which turns the kinase in a constitutively active form and confers to the kinase a Ca(2+)-independent activity. Its function is as follows. Calcium/calmodulin-dependent protein kinase that functions autonomously after Ca(2+)/calmodulin-binding and autophosphorylation, and is involved in various processes, such as synaptic plasticity, neurotransmitter release and long-term potentiation. Member of the NMDAR signaling complex in excitatory synapses, it regulates NMDAR-dependent potentiation of the AMPAR and therefore excitatory synaptic transmission. Regulates dendritic spine development. Also regulates the migration of developing neurons. Phosphorylates the transcription factor FOXO3 to activate its transcriptional activity. Phosphorylates the transcription factor ETS1 in response to calcium signaling, thereby decreasing ETS1 affinity for DNA. In response to interferon-gamma (IFN-gamma) stimulation, catalyzes phosphorylation of STAT1, stimulating the JAK-STAT signaling pathway. In response to interferon-beta (IFN-beta) stimulation, stimulates the JAK-STAT signaling pathway. Acts as a negative regulator of 2-arachidonoylglycerol (2-AG)-mediated synaptic signaling via modulation of DAGLA activity. This Pongo abelii (Sumatran orangutan) protein is Calcium/calmodulin-dependent protein kinase type II subunit alpha (CAMK2A).